We begin with the raw amino-acid sequence, 220 residues long: Ribose-5-phosphate isomerase A (220 aa).

Substrate contacts are provided by residues 29–32 (TGST), 82–85 (DGCD), and 95–98 (KGGG). The Proton acceptor role is filled by glutamate 104. Position 122 (lysine 122) interacts with substrate.

Belongs to the ribose 5-phosphate isomerase family. Homodimer.

The enzyme catalyses aldehydo-D-ribose 5-phosphate = D-ribulose 5-phosphate. It participates in carbohydrate degradation; pentose phosphate pathway; D-ribose 5-phosphate from D-ribulose 5-phosphate (non-oxidative stage): step 1/1. Functionally, catalyzes the reversible conversion of ribose-5-phosphate to ribulose 5-phosphate. This chain is Ribose-5-phosphate isomerase A, found in Laribacter hongkongensis (strain HLHK9).